The chain runs to 99 residues: Pyruvate synthase subunit PorD (99 aa).

2 4Fe-4S ferredoxin-type domains span residues 32 to 60 and 61 to 91; these read MRPI…IQEG and GIMK…MRPE. [4Fe-4S] cluster contacts are provided by cysteine 41, cysteine 44, cysteine 47, cysteine 51, cysteine 71, cysteine 74, cysteine 77, and cysteine 81.

Heterotetramer of one alpha, one beta, one delta and one gamma chain. [4Fe-4S] cluster serves as cofactor.

This Thermotoga maritima (strain ATCC 43589 / DSM 3109 / JCM 10099 / NBRC 100826 / MSB8) protein is Pyruvate synthase subunit PorD (porD).